Here is a 584-residue protein sequence, read N- to C-terminus: FAD-linked oxidoreductase OXR2 (584 aa).

The signal sequence occupies residues 1 to 22 (MRSIISAFILSLNFCTQPLVRG). 7 N-linked (GlcNAc...) asparagine glycosylation sites follow: asparagine 75, asparagine 97, asparagine 115, asparagine 225, asparagine 302, asparagine 321, and asparagine 507. The FAD-binding PCMH-type domain occupies 128 to 310 (LGMLSEKYIA…LNATFKVEPV (183 aa)).

The protein belongs to the oxygen-dependent FAD-linked oxidoreductase family. FAD is required as a cofactor.

The protein operates within secondary metabolite biosynthesis. Functionally, FAD-linked oxidoreductase; part of the gene cluster that mediates the biosynthesis of a tyrosine-derived cytochalasan acting as a fungal signal recognized by resistant rice plants and leads to avirulence in Pi33 resistant rice cultivars. The first step in the pathway is catalyzed by the hybrid PKS-NRPS ACE1, assisted by the enoyl reductase RAP1, that are responsible for fusion of the tyrosine precursor and the polyketide backbone. The polyketide synthase module (PKS) of ACE1 is responsible for the synthesis of the polyketide backbone and the downstream nonribosomal peptide synthetase (NRPS) amidates the carboxyl end of the polyketide with the tyrosine precursor. Because ACE1 lacks a designated enoylreductase (ER) domain, the required activity is provided the enoyl reductase RAP1. Reduction by the hydrolyase ORFZ, followed by dehydration and intra-molecular Diels-Alder cyclization by the Diels-Alderase ORF3 then yield the required isoindolone-fused macrocycle. A number of oxidative steps catalyzed by the tailoring enzymes identified within the cluster, including cytochrome P450 monooxygenases CYP1 to CYP4, the FAD-linked oxidoreductase OXR2 and the short-chain dehydrogenase/reductase OXR1, are further required to afford the final cytochalasans that confer avirulence and which have still to be identified. The monooxygenase CYP1 has been shown to be a site-selective C-18 hydroxylase whereas the function of CYP3 is the site-selective epoxidation of the C-6/C-7 olefin that is present in some intermediate compounds. Finally, SYN2 and RAP2 are not required for avirulence in Pi33 resistant rice cultivars. This is FAD-linked oxidoreductase OXR2 from Pyricularia oryzae (strain 70-15 / ATCC MYA-4617 / FGSC 8958) (Rice blast fungus).